Consider the following 323-residue polypeptide: Type II restriction enzyme BsoBI (323 aa).

Mg(2+)-binding residues include Asp-212, Glu-240, and Lys-242.

In terms of assembly, homodimer.

It carries out the reaction Endonucleolytic cleavage of DNA to give specific double-stranded fragments with terminal 5'-phosphates.. A P subtype restriction enzyme that recognizes the double-stranded sequence 5'-CYCGRG-3' and cleaves after C-1. In Geobacillus stearothermophilus (Bacillus stearothermophilus), this protein is Type II restriction enzyme BsoBI.